Consider the following 98-residue polypeptide: Small ribosomal subunit protein bS6 (98 aa).

This sequence belongs to the bacterial ribosomal protein bS6 family.

Binds together with bS18 to 16S ribosomal RNA. This chain is Small ribosomal subunit protein bS6, found in Limosilactobacillus reuteri (strain DSM 20016) (Lactobacillus reuteri).